Here is a 212-residue protein sequence, read N- to C-terminus: ATP phosphoribosyltransferase (212 aa).

This sequence belongs to the ATP phosphoribosyltransferase family. Short subfamily. Heteromultimer composed of HisG and HisZ subunits.

The protein resides in the cytoplasm. The enzyme catalyses 1-(5-phospho-beta-D-ribosyl)-ATP + diphosphate = 5-phospho-alpha-D-ribose 1-diphosphate + ATP. Its pathway is amino-acid biosynthesis; L-histidine biosynthesis; L-histidine from 5-phospho-alpha-D-ribose 1-diphosphate: step 1/9. Functionally, catalyzes the condensation of ATP and 5-phosphoribose 1-diphosphate to form N'-(5'-phosphoribosyl)-ATP (PR-ATP). Has a crucial role in the pathway because the rate of histidine biosynthesis seems to be controlled primarily by regulation of HisG enzymatic activity. The protein is ATP phosphoribosyltransferase of Prochlorococcus marinus (strain MIT 9301).